The sequence spans 331 residues: MIKKYYDADCNLGLLDGKTIAIMGYGSQGHAHAQNLKDSGMNVIVGLRKDSANCKKAEEAGFKVMEVEEAAKLADIVMMLVPDEVSADIYNTQVAPHMKEGNVLMYAHGFNIHFQFVVPAKNIDVIMVAPKGPGHTVRSQYLEGRGVPSLIAVYQDFSGRAKDYALAYASGIGAGRAGILETTFREETETDLFGEQAVLCGGVTELMKAGFDTLVEAGYEPEMAYFECIHEMKLIVDLIYSGGFAMMRYSISNTAEYGDYRTGRRMITEETRKEMKKVLREIQDGTFASEFIQEFSAGRKAKFNATKKLESEHKLEKVGAELRKMMSWIKK.

The KARI N-terminal Rossmann domain occupies 2 to 182 (IKKYYDADCN…GAGRAGILET (181 aa)). Residues 25-28 (YGSQ), Arg48, and Ser51 contribute to the NADP(+) site. His108 is a catalytic residue. NADP(+) is bound at residue Gly134. The region spanning 183 to 329 (TFREETETDL…AELRKMMSWI (147 aa)) is the KARI C-terminal knotted domain. Mg(2+) contacts are provided by Asp191, Glu195, Glu227, and Glu231. Ser252 serves as a coordination point for substrate.

This sequence belongs to the ketol-acid reductoisomerase family. Mg(2+) is required as a cofactor.

It catalyses the reaction (2R)-2,3-dihydroxy-3-methylbutanoate + NADP(+) = (2S)-2-acetolactate + NADPH + H(+). The enzyme catalyses (2R,3R)-2,3-dihydroxy-3-methylpentanoate + NADP(+) = (S)-2-ethyl-2-hydroxy-3-oxobutanoate + NADPH + H(+). Its pathway is amino-acid biosynthesis; L-isoleucine biosynthesis; L-isoleucine from 2-oxobutanoate: step 2/4. It functions in the pathway amino-acid biosynthesis; L-valine biosynthesis; L-valine from pyruvate: step 2/4. Involved in the biosynthesis of branched-chain amino acids (BCAA). Catalyzes an alkyl-migration followed by a ketol-acid reduction of (S)-2-acetolactate (S2AL) to yield (R)-2,3-dihydroxy-isovalerate. In the isomerase reaction, S2AL is rearranged via a Mg-dependent methyl migration to produce 3-hydroxy-3-methyl-2-ketobutyrate (HMKB). In the reductase reaction, this 2-ketoacid undergoes a metal-dependent reduction by NADPH to yield (R)-2,3-dihydroxy-isovalerate. The sequence is that of Ketol-acid reductoisomerase (NADP(+)) from Brachyspira hyodysenteriae (strain ATCC 49526 / WA1).